A 149-amino-acid chain; its full sequence is Large ribosomal subunit protein bL9 (149 aa).

This sequence belongs to the bacterial ribosomal protein bL9 family.

Binds to the 23S rRNA. The polypeptide is Large ribosomal subunit protein bL9 (Salmonella agona (strain SL483)).